The sequence spans 117 residues: Mini-circle uncharacterized 12.9 kDa protein (117 aa).

The protein is Mini-circle uncharacterized 12.9 kDa protein of Streptomyces coelicolor (strain ATCC BAA-471 / A3(2) / M145).